The chain runs to 257 residues: 7-carboxy-7-deazaguanine synthase (257 aa).

The segment at M1–A25 is disordered. Substrate contacts are provided by residues R39 to G41 and R54. The Radical SAM core domain maps to L45 to D244. [4Fe-4S] cluster-binding residues include C58, C62, and C65. T67 provides a ligand contact to Mg(2+). T99 contacts substrate. S-adenosyl-L-methionine-binding positions include G101 and S143 to K145.

It belongs to the radical SAM superfamily. 7-carboxy-7-deazaguanine synthase family. As to quaternary structure, homodimer. Requires [4Fe-4S] cluster as cofactor. It depends on S-adenosyl-L-methionine as a cofactor. Mg(2+) is required as a cofactor.

It carries out the reaction 6-carboxy-5,6,7,8-tetrahydropterin + H(+) = 7-carboxy-7-deazaguanine + NH4(+). It functions in the pathway purine metabolism; 7-cyano-7-deazaguanine biosynthesis. Its function is as follows. Catalyzes the complex heterocyclic radical-mediated conversion of 6-carboxy-5,6,7,8-tetrahydropterin (CPH4) to 7-carboxy-7-deazaguanine (CDG), a step common to the biosynthetic pathways of all 7-deazapurine-containing compounds. This is 7-carboxy-7-deazaguanine synthase from Rhodopirellula baltica (strain DSM 10527 / NCIMB 13988 / SH1).